Here is a 322-residue protein sequence, read N- to C-terminus: GDSL esterase/lipase At2g04020 (322 aa).

A signal peptide spans 1 to 26 (MGLPSSLESYLLLILLSFLNVSTIYS). Serine 50 (nucleophile) is an active-site residue. An N-linked (GlcNAc...) asparagine glycan is attached at asparagine 260. Catalysis depends on residues aspartate 296 and histidine 299.

It belongs to the 'GDSL' lipolytic enzyme family.

The protein localises to the secreted. This is GDSL esterase/lipase At2g04020 from Arabidopsis thaliana (Mouse-ear cress).